A 445-amino-acid polypeptide reads, in one-letter code: 23S rRNA (uracil(1939)-C(5))-methyltransferase RlmD (445 aa).

The TRAM domain maps to 12 to 70 (SKQLSSKLSLKVTQLDHLGAGIAHHDGKIVFINGALPGETVSVQLTEQKKKFARAKLLK). Residues Cys-83, Cys-89, Cys-92, and Cys-171 each coordinate [4Fe-4S] cluster. S-adenosyl-L-methionine-binding residues include Gln-278, Phe-307, Asn-312, Glu-328, Asp-355, and Asp-375. The Nucleophile role is filled by Cys-401.

It belongs to the class I-like SAM-binding methyltransferase superfamily. RNA M5U methyltransferase family. RlmD subfamily.

It carries out the reaction uridine(1939) in 23S rRNA + S-adenosyl-L-methionine = 5-methyluridine(1939) in 23S rRNA + S-adenosyl-L-homocysteine + H(+). Functionally, catalyzes the formation of 5-methyl-uridine at position 1939 (m5U1939) in 23S rRNA. The protein is 23S rRNA (uracil(1939)-C(5))-methyltransferase RlmD of Shewanella halifaxensis (strain HAW-EB4).